The primary structure comprises 29 residues: EDFDSQCVPTADPGPCKAYIPMWWYNVLS.

Positions 6–26 (QCVPTADPGPCKAYIPMWWYN) constitute a BPTI/Kunitz inhibitor domain.

Serine protease inhibitor. Inhibits trypsin, elastase, plasmin and kallikrein. This chain is Kunitz-type serine protease inhibitor RsTIQ7, found in Rhipicephalus sanguineus (Brown dog tick).